The primary structure comprises 299 residues: Proline iminopeptidase (299 aa).

Residues 26–272 (VLLLAGGPGF…QFLYCANGSH (247 aa)) enclose the AB hydrolase-1 domain. Serine 103 acts as the Nucleophile in catalysis. Aspartate 245 is an active-site residue. Catalysis depends on histidine 272, which acts as the Proton donor.

This sequence belongs to the peptidase S33 family. Monomer.

The enzyme catalyses Release of N-terminal proline from a peptide.. Functionally, releases the N-terminal proline from various substrates. This chain is Proline iminopeptidase, found in Chitinophaga pinensis (strain ATCC 43595 / DSM 2588 / LMG 13176 / NBRC 15968 / NCIMB 11800 / UQM 2034).